The following is a 190-amino-acid chain: Imidazoleglycerol-phosphate dehydratase (190 aa).

This sequence belongs to the imidazoleglycerol-phosphate dehydratase family.

It is found in the cytoplasm. It catalyses the reaction D-erythro-1-(imidazol-4-yl)glycerol 3-phosphate = 3-(imidazol-4-yl)-2-oxopropyl phosphate + H2O. It functions in the pathway amino-acid biosynthesis; L-histidine biosynthesis; L-histidine from 5-phospho-alpha-D-ribose 1-diphosphate: step 6/9. This is Imidazoleglycerol-phosphate dehydratase from Aliarcobacter butzleri (strain RM4018) (Arcobacter butzleri).